A 373-amino-acid polypeptide reads, in one-letter code: Protein CAF40 (373 aa).

The tract at residues 1–91 is disordered; sequence MFSAQKPIYG…ANATRNNPNM (91 aa). Over residues 11 to 22 the composition is skewed to gly residues; the sequence is NGAGVNMGGGGP. The segment covering 50-88 has biased composition (low complexity); that stretch reads GGPMLMGNTPNNNNSNENGENNGNNGNNGGNDANATRNN.

It belongs to the CNOT9 family. In terms of assembly, subunit of the 1.0 MDa CCR4-NOT core complex that contains CCR4, CAF1, NOT1, NOT2, NOT3, NOT4, NOT5, CAF40 and CAF130. In the complex interacts with NOT1. The core complex probably is part of a less characterized 1.9 MDa CCR4-NOT complex.

Its subcellular location is the cytoplasm. The protein localises to the nucleus. In terms of biological role, acts as a component of the CCR4-NOT core complex, which in the nucleus seems to be a general transcription factor, and in the cytoplasm the major mRNA deadenylase involved in mRNA turnover. The chain is Protein CAF40 (CAF40) from Saccharomyces cerevisiae (strain ATCC 204508 / S288c) (Baker's yeast).